The chain runs to 419 residues: Tyrosine--tRNA ligase (419 aa).

Tyr36 provides a ligand contact to L-tyrosine. The short motif at 41-50 (PTGDSMHIGH) is the 'HIGH' region element. 2 residues coordinate L-tyrosine: Tyr168 and Gln172. Positions 230–234 (KFGKT) match the 'KMSKS' region motif. Residue Lys233 participates in ATP binding. The 68-residue stretch at 352 to 419 (KNIVDFLVDA…KKKYFLARVK (68 aa)) folds into the S4 RNA-binding domain.

It belongs to the class-I aminoacyl-tRNA synthetase family. TyrS type 1 subfamily. In terms of assembly, homodimer.

The protein resides in the cytoplasm. It carries out the reaction tRNA(Tyr) + L-tyrosine + ATP = L-tyrosyl-tRNA(Tyr) + AMP + diphosphate + H(+). Catalyzes the attachment of tyrosine to tRNA(Tyr) in a two-step reaction: tyrosine is first activated by ATP to form Tyr-AMP and then transferred to the acceptor end of tRNA(Tyr). The protein is Tyrosine--tRNA ligase of Latilactobacillus sakei subsp. sakei (strain 23K) (Lactobacillus sakei subsp. sakei).